The following is a 501-amino-acid chain: MTRLNILMAASECVPFAKEGGLADVVGVLPKYLAHMGHDVRVVMPLYSRIDPERFGLERLPGVLVVPMGIMGNQYCGVWEGRLPGSAVPVYFLEHEGYYGREGLYEEDNVGYMDNDNRFIFLSRAAMELPKLIGFAPDVFHAHDWHTAAVPVFLNTLYRDDPLVGGAASVLTVHNMQHQGNFYPGAMEVLGIGWEHFTFLGLEKDNQTNLLKGGLYHATVLNTVSEGYAREMQTPEYGWGLDGVVRARSADLVGILNGVDYEEWNPETDPHIVANYSRSDLSGKKLCKRDVQRFFGLPERDDVPLFGLVGRLVKQKGIDILAEAIHRILALDVQVVMLGAGEPWSHFYFGDVRNEYPEKFGLYIGYNNGLSHRIEAGSDFFVMPSAFEPCGLNQMYSLRYGTLPIVRATGGLDDSVENFDEQNLTGNGFKFWSHDADALFDTVGWTVHTWYRRKDAMAALIGNAMAKRFTWEDSAARYEELYCRALRKRLGVGVFVRRFGG.

Lysine 18 lines the ADP-alpha-D-glucose pocket.

This sequence belongs to the glycosyltransferase 1 family. Bacterial/plant glycogen synthase subfamily.

The catalysed reaction is [(1-&gt;4)-alpha-D-glucosyl](n) + ADP-alpha-D-glucose = [(1-&gt;4)-alpha-D-glucosyl](n+1) + ADP + H(+). It participates in glycan biosynthesis; glycogen biosynthesis. In terms of biological role, synthesizes alpha-1,4-glucan chains using ADP-glucose. The sequence is that of Glycogen synthase 1 from Geobacter sulfurreducens (strain ATCC 51573 / DSM 12127 / PCA).